A 213-amino-acid chain; its full sequence is Ras-related protein Rab-25 (213 aa).

GTP is bound by residues S21, G24, K25, T26, N27, S38, H39, T43, and T44. T26 is a Mg(2+) binding site. 2 consecutive short sequence motifs (switch) follow at residues 35-49 (NEFSHDSRTTIGVEF) and 67-84 (DTAGLERYRAITSAYYRG). The Mg(2+) site is built by T44 and D67. 6 residues coordinate GTP: G70, N125, K126, D128, A156, and L157. S-geranylgeranyl cysteine attachment occurs at residues C209 and C210. C210 is modified (cysteine methyl ester). Positions 211–213 (INL) are cleaved as a propeptide — removed in mature form.

The protein belongs to the small GTPase superfamily. Rab family. In terms of assembly, interacts (GTP-bound form) with RAB11FIP1, RAB11FIP2, RAB11FIP3 and RAB11FIP4. Interacts (via the hypervariable C-terminal region) with ITGB1 (via the cytoplasmic region); the interaction is GTP-dependent. Interacts with ITGAV. Associates with the integrin alpha-V/beta-1 heterodimer. Interacts with VPS33B. It depends on Mg(2+) as a cofactor. Expression is restricted to epithelial cells. Expressed in the gastrointestinal mucosa, (highest expression seen in the ileum and colon), kidney, and lung. A very minor and variable level of expression is seen in the splenic tissue.

It is found in the cell membrane. The protein resides in the cell projection. It localises to the pseudopodium membrane. The protein localises to the cytoplasmic vesicle. It catalyses the reaction GTP + H2O = GDP + phosphate + H(+). Its activity is regulated as follows. Regulated by guanine nucleotide exchange factors (GEFs) which promote the exchange of bound GDP for free GTP. Regulated by GTPase activating proteins (GAPs) which increase the GTP hydrolysis activity. Inhibited by GDP dissociation inhibitors (GDIs) which prevent Rab-GDP dissociation. In terms of biological role, the small GTPases Rab are key regulators of intracellular membrane trafficking, from the formation of transport vesicles to their fusion with membranes. Rabs cycle between an inactive GDP-bound form and an active GTP-bound form that is able to recruit to membranes different set of downstream effectors directly responsible for vesicle formation, movement, tethering and fusion. RAB25 regulates epithelial cell differentiation, proliferation and survival, thereby playing key roles in tumorigenesis. Promotes invasive migration of cells in which it functions to localize and maintain integrin alpha-V/beta-1 at the tips of extending pseudopodia. Involved in the regulation of epithelial morphogenesis through the control of CLDN4 expression and localization at tight junctions. May selectively regulate the apical recycling pathway. Together with MYO5B regulates transcytosis. This is Ras-related protein Rab-25 (RAB25) from Oryctolagus cuniculus (Rabbit).